The primary structure comprises 878 residues: DNA mismatch repair protein MutS (878 aa).

Position 630–637 (630–637 (GPNMAGKS)) interacts with ATP.

This sequence belongs to the DNA mismatch repair MutS family.

In terms of biological role, this protein is involved in the repair of mismatches in DNA. It is possible that it carries out the mismatch recognition step. This protein has a weak ATPase activity. This chain is DNA mismatch repair protein MutS, found in Chlorobaculum tepidum (strain ATCC 49652 / DSM 12025 / NBRC 103806 / TLS) (Chlorobium tepidum).